The chain runs to 447 residues: Gamma-glutamyl phosphate reductase (447 aa).

It belongs to the gamma-glutamyl phosphate reductase family.

Its subcellular location is the cytoplasm. The enzyme catalyses L-glutamate 5-semialdehyde + phosphate + NADP(+) = L-glutamyl 5-phosphate + NADPH + H(+). Its pathway is amino-acid biosynthesis; L-proline biosynthesis; L-glutamate 5-semialdehyde from L-glutamate: step 2/2. In terms of biological role, catalyzes the NADPH-dependent reduction of L-glutamate 5-phosphate into L-glutamate 5-semialdehyde and phosphate. The product spontaneously undergoes cyclization to form 1-pyrroline-5-carboxylate. The protein is Gamma-glutamyl phosphate reductase of Methanosarcina mazei (strain ATCC BAA-159 / DSM 3647 / Goe1 / Go1 / JCM 11833 / OCM 88) (Methanosarcina frisia).